A 416-amino-acid polypeptide reads, in one-letter code: Basic salivary proline-rich protein 2 (416 aa).

The signal sequence occupies residues 1 to 16; that stretch reads MLLILLSVALLALSSA. Q17 carries the pyrrolidone carboxylic acid modification. A compositionally biased stretch (polar residues) spans 19-28; sequence LNEDVSQEES. Residues 19-416 are disordered; the sequence is LNEDVSQEES…QGGRPSRPPQ (398 aa). Phosphoserine is present on S24. A compositionally biased stretch (low complexity) spans 34–47; that stretch reads GNPQGAPPQGGNKP. Composition is skewed to pro residues over residues 48–104 and 112–165; these read QGPP…PPPQ and RSPP…PPPQ. Phosphoserine is present on S52. 15 consecutive repeat copies span residues 53–72, 74–93, 94–113, 114–133, 135–154, 155–174, 176–195, 197–216, 217–236, 238–257, 259–278, 279–298, 300–319, 321–340, and 341–360. The 15 X 20 AA approximate tandem repeats of P-P-G-K-P-Q-G-P-P-P-Q-G-[GD]-[NKS]-[KSQ]-[PRS]-[QRS] [GPS]-[PSAR]-[PSR] stretch occupies residues 53 to 360; the sequence is PPGKPQGPPP…QGGSKSRSAR (308 aa). N168 is a glycosylation site (N-linked (GlcNAc...) asparagine). A compositionally biased stretch (pro residues) spans 177–227; the sequence is PGKPQGPPPQGGNQPQGPPPPPGKPQGPPPQGGNKPQGPPPPGKPQGPPPQ. A glycan (N-linked (GlcNAc...) asparagine) is linked at N230. O-linked (Hex) serine glycosylation occurs at S232. Over residues 239–289 the composition is skewed to pro residues; that stretch reads PGKPQGPPPQGGNQPQGPPPPPGKPQGPPPQGGNKPQGPPPPGKPQGPPPQ. N-linked (GlcNAc...) asparagine glycosylation occurs at N272. Low complexity predominate over residues 290–300; the sequence is GGSKSRSSRSP. 2 stretches are compositionally biased toward pro residues: residues 301–351 and 378–416; these read PGKP…PPPQ and QGPPPPAGGNPQQPQAPPAGQPQGPPRPPQGGRPSRPPQ.

N- and O-glycosylated. In head and neck cancer patients, O-glycosylated with glucosylgalactosyl carbohydrate moiety. This modification would require prior hydroxylation on the lysine residue. In terms of processing, proteolytically cleaved at the tripeptide Xaa-Pro-Gln, where Xaa in the P(3) position is mostly lysine. The endoprotease may be of microbial origin. Post-translationally, pyroglutamate formation occurs on terminal Gln residues of cleaved peptides. Pyroglutamate formation found on at least Gln-398 and Gln-400.

It localises to the secreted. This Homo sapiens (Human) protein is Basic salivary proline-rich protein 2 (PRB2).